The primary structure comprises 151 residues: Natriuretic peptides A (151 aa).

The N-terminal stretch at 1 to 25 (MSSFSTTTVSFLLLLAFQLLGQTRA) is a signal peptide. Residues 62-105 (VLSEPNEEAGAALSPLPEVPPWTGEVSPAQRDGGALGRGPWDSS) form a disordered region. The propeptide occupies 93–103 (DGGALGRGPWD). Position 129 is a phosphoserine (serine 129). Cysteine 130 and cysteine 146 form a disulfide bridge. The tract at residues 147–151 (NSFRY) is important for degradation of atrial natriuretic peptide by IDE.

It belongs to the natriuretic peptide family. Homodimer; disulfide-linked antiparallel dimer. The precursor molecule is proteolytically cleaved by CORIN at Arg-123 to produce atrial natriuretic peptide. Undergoes further proteolytic cleavage by unknown proteases to give rise to long-acting natriuretic peptide, vessel dilator and kaliuretic peptide. Additional processing gives rise to the auriculin and atriopeptin peptides. In the kidneys, alternative processing by an unknown protease results in the peptide urodilatin. Post-translationally, cleavage by MME initiates degradation of the factor and thereby regulates its activity. Degraded by IDE (in vitro). During IDE degradation, the resulting products can temporarily stimulate NPR2 to produce cGMP, before the fragments are completely degraded and inactivated by IDE (in vitro). In terms of processing, degraded by IDE. Phosphorylation on Ser-129 decreases vasorelaxant activity. In terms of tissue distribution, detected in the kidney distal tubular cells (at protein level). Present in urine (at protein level). Detected in atrial and ventricular plasma samples, and in adipocytes (at protein level). Detected in urine in one study. However, was not detected in urine in another study. In the brain, predominantly expressed in the gray matter with very weak expression in the white matter (at protein level). Localizes to astrocyte-like structures throughout the white matter, and in the cerebral vessels detected in the leptomeningeal and parenchymal vessels, and endothelium and smooth muscle layers (at protein level). Relatively low levels of expression in the kidneys compared to urodilatin (at protein level).

The protein localises to the secreted. Its subcellular location is the perikaryon. It localises to the cell projection. Hormone that plays a key role in mediating cardio-renal homeostasis, and is involved in vascular remodeling and regulating energy metabolism. Acts by specifically binding and stimulating NPR1 to produce cGMP, which in turn activates effector proteins, such as PRKG1, that drive various biological responses. Regulates vasodilation, natriuresis, diuresis and aldosterone synthesis and is therefore essential for regulating blood pressure, controlling the extracellular fluid volume and maintaining the fluid-electrolyte balance. Also involved in inhibiting cardiac remodeling and cardiac hypertrophy by inducing cardiomyocyte apoptosis and attenuating the growth of cardiomyocytes and fibroblasts. Plays a role in female pregnancy by promoting trophoblast invasion and spiral artery remodeling in uterus, and thus prevents pregnancy-induced hypertension. In adipose tissue, acts in various cGMP- and PKG-dependent pathways to regulate lipid metabolism and energy homeostasis. This includes up-regulating lipid metabolism and mitochondrial oxygen utilization by activating the AMP-activated protein kinase (AMPK), and increasing energy expenditure by acting via MAPK11 to promote the UCP1-dependent thermogenesis of brown adipose tissue. Binds the clearance receptor NPR3 which removes the hormone from circulation. In terms of biological role, may have a role in cardio-renal homeostasis through regulation of natriuresis, diuresis, vasodilation, and inhibiting aldosterone synthesis. In vitro, promotes the production of cGMP and induces vasodilation. May promote natriuresis, at least in part, by enhancing prostaglandin E2 synthesis resulting in the inhibition of renal Na+-K+-ATPase. However reports on the involvement of this peptide in mammal blood volume and blood pressure homeostasis are conflicting; according to a report, in vivo it is not sufficient to activate cGMP and does not inhibit collecting duct transport nor effect diuresis and natriuresis. Appears to bind to specific receptors that are distinct from the receptors bound by atrial natriuretic peptide and vessel dilator. Possibly enhances protein excretion in urine by decreasing proximal tubular protein reabsorption. Functionally, may have a role in cardio-renal homeostasis through regulation of natriuresis, diuresis, and vasodilation. In vitro, promotes the production of cGMP and induces vasodilation. May promote natriuresis, at least in part, by enhancing prostaglandin E2 synthesis resulting in the inhibition of renal Na+-K+-ATPase. However reports on the involvement of this peptide in mammal blood volume and blood pressure homeostasis are conflicting; according to a report it is not sufficient to activate cGMP and does not inhibit collecting duct transport nor effect diuresis and natriuresis. Appears to bind to specific receptors that are distinct from the receptors bound by the atrial natriuretic and long-acting natriuretic peptides. Possibly functions in protein excretion in urine by maintaining the integrity of the proximal tubules and enhancing protein excretion by decreasing proximal tubular protein reabsorption. Its function is as follows. May have a role in cardio-renal homeostasis through regulation of diuresis and inhibiting aldosterone synthesis. In vitro, promotes the production of cGMP and induces vasodilation. May promote natriuresis, at least in part, by enhancing prostaglandin E2 synthesis resulting in the inhibition of renal Na+-K+-ATPase. May have a role in potassium excretion but not sodium excretion (natriuresis). Possibly enhances protein excretion in urine by decreasing proximal tubular protein reabsorption. Hormone produced in the kidneys that appears to be important for maintaining cardio-renal homeostasis. Mediates vasodilation, natriuresis and diuresis primarily in the renal system, in order to maintain the extracellular fluid volume and control the fluid-electrolyte balance. Specifically binds and stimulates cGMP production by renal transmembrane receptors, likely NPR1. Urodilatin not ANP, may be the natriuretic peptide responsible for the regulation of sodium and water homeostasis in the kidney. In terms of biological role, may have a role in cardio-renal homeostasis through regulation of natriuresis and vasodilation. In vivo promotes natriuresis and in vitro, vasodilates renal artery strips. Functionally, may have a role in cardio-renal homeostasis through regulation of regulation of natriuresis and vasodilation. In vivo promotes natriuresis. In vitro, vasodilates intestinal smooth muscle but not smooth muscle strips. Its function is as follows. May have a role in cardio-renal homeostasis through regulation of natriuresis and vasodilation. In vivo promotes natriuresis. In vitro, selectively vasodilates intestinal and vascular smooth muscle strips. May have a role in cardio-renal homeostasis through regulation of natriuresis and vasodilation. In vivo promotes natriuresis. In vitro, selectively vasodilates intestinal smooth muscle but not vascular smooth muscle strips. The chain is Natriuretic peptides A (NPPA) from Homo sapiens (Human).